Consider the following 380-residue polypeptide: Kappa-type opioid receptor (380 aa).

Topologically, residues 1–57 (MEPPVQIFRGEPGPTCSPSTCLPPNGSGWFPGWAEPDGNGSAGSEDVLLEPAHISPV) are extracellular. 2 N-linked (GlcNAc...) asparagine glycosylation sites follow: Asn25 and Asn39. The chain crosses the membrane as a helical span at residues 58–85 (ILVIITAVYSVVFVVGLVGNSLVMFVII). Residues 86 to 95 (RYTKMKTATN) lie on the Cytoplasmic side of the membrane. A helical transmembrane segment spans residues 96–119 (IYIFNLALADALVTTTMPFQSTVY). The Extracellular portion of the chain corresponds to 120-132 (LMNSWPFGDVLCK). A disulfide bond links Cys131 and Cys210. Residues 133 to 154 (VVISIDYYNMFTSIFTLTMMSV) traverse the membrane as a helical segment. Over 155–173 (DRYIAVCHPVKALDFRTPL) the chain is Cytoplasmic. The helical transmembrane segment at 174-196 (KAKIINICIWILSSSVGISAIVL) threads the bilayer. The Extracellular portion of the chain corresponds to 197–222 (GGTKVREDMEVIECSLQFPDDDYSWW). Residues 223–247 (DLFMKVCVFVFAFVIPVLIIIVCYT) traverse the membrane as a helical segment. The Cytoplasmic portion of the chain corresponds to 248 to 274 (LMILRLKSVRLLSGSREKDRNLRRITR). The helical transmembrane segment at 275–296 (LVLVVVAVFVVCWTPIHIFILV) threads the bilayer. The Extracellular segment spans residues 297 to 311 (EALGSTAHSTAALSS). Residues 312 to 333 (YYFCIALGYTNSSLNPILYAFL) form a helical membrane-spanning segment. Over 334 to 380 (DENFKRCFRDFCFPIKMRMERQSTSRVRNTVQDPAYVREVDGVNKPV) the chain is Cytoplasmic. Cys345 carries S-palmitoyl cysteine lipidation.

It belongs to the G-protein coupled receptor 1 family. Interacts with NHERF1. Interacts with GABARAPL1.

It localises to the cell membrane. G-protein coupled opioid receptor that functions as a receptor for endogenous alpha-neoendorphins and dynorphins, but has low affinity for beta-endorphins. Also functions as a receptor for various synthetic opioids and for the psychoactive diterpene salvinorin A. Ligand binding causes a conformation change that triggers signaling via guanine nucleotide-binding proteins (G proteins) and modulates the activity of down-stream effectors, such as adenylate cyclase. Signaling leads to the inhibition of adenylate cyclase activity. Inhibits neurotransmitter release by reducing calcium ion currents and increasing potassium ion conductance. Plays a role in the perception of pain. Plays a role in mediating reduced physical activity upon treatment with synthetic opioids. Plays a role in the regulation of salivation in response to synthetic opioids. May play a role in arousal and regulation of autonomic and neuroendocrine functions. In Bos taurus (Bovine), this protein is Kappa-type opioid receptor (OPRK1).